A 372-amino-acid chain; its full sequence is NADH-quinone oxidoreductase subunit D (372 aa).

The protein belongs to the complex I 49 kDa subunit family. NDH-1 is composed of 14 different subunits. Subunits NuoB, C, D, E, F, and G constitute the peripheral sector of the complex.

The protein localises to the cell inner membrane. The enzyme catalyses a quinone + NADH + 5 H(+)(in) = a quinol + NAD(+) + 4 H(+)(out). In terms of biological role, NDH-1 shuttles electrons from NADH, via FMN and iron-sulfur (Fe-S) centers, to quinones in the respiratory chain. The immediate electron acceptor for the enzyme in this species is believed to be ubiquinone. Couples the redox reaction to proton translocation (for every two electrons transferred, four hydrogen ions are translocated across the cytoplasmic membrane), and thus conserves the redox energy in a proton gradient. The polypeptide is NADH-quinone oxidoreductase subunit D (Desulfotalea psychrophila (strain LSv54 / DSM 12343)).